The sequence spans 55 residues: Riparin-1.5 acid (55 aa).

Positions 1 to 15 (MKIIVFLAVLMLVSA) are cleaved as a signal peptide. Positions 16-41 (QVCLVSAAEMEHSSDNELSSRDLVKR) are excised as a propeptide. Cysteine 47 and cysteine 53 are disulfide-bonded. Residues 54–55 (NH) constitute a propeptide that is removed on maturation.

Expressed by the skin glands.

It localises to the secreted. The protein is Riparin-1.5 acid of Crinia riparia (Streambank froglet).